The chain runs to 4171 residues: Cytoplasmic dynein 2 heavy chain 1 (4171 aa).

Positions 1–1598 (MSSDSKDQRK…VLRQVSSEFE (1598 aa)) are stem. Residue 115–122 (GKELTEGN) coordinates ATP. Coiled-coil stretches lie at residues 164-203 (ANDY…CDEL), 629-693 (KQLE…KEEE), 829-861 (DLEE…AERL), 927-1048 (EIAE…KEKR), and 1354-1383 (SRQS…LEQK). AAA stretches follow at residues 1599-1823 (YTYE…VLGG), 1883-2100 (EPLG…VRSH), 2184-2432 (VTKE…WVVS), and 2527-2767 (RFAF…PIKY). ATP is bound by residues 1637-1644 (GPAGTGKT), 1921-1928 (GAAGSGKS), 2226-2233 (GTTGCGKQ), and 2565-2572 (GRPGFGRR). The stalk stretch occupies residues 2776 to 3064 (QLLGYKRLTL…VDLDREQDTI (289 aa)). 3 coiled-coil regions span residues 2790–2877 (ERLK…KEVQ), 2999–3059 (EKIA…DLDR), and 3308–3336 (ELEE…LLLQ). 2 AAA regions span residues 3140–3367 (ASLE…IITK) and 3575–3784 (LMDF…FVEQ).

This sequence belongs to the dynein heavy chain family. The cytoplasmic dynein complex 2 is probably composed by a heavy chain che-3 homodimer and a number of light intermediate chains.

Its subcellular location is the cell projection. The protein resides in the cilium membrane. The protein localises to the cytoplasm. It is found in the cytoskeleton. Its function is as follows. Functions as a motor for intraflagellar retrograde transport in chemosensory neurons. Functions in cilia biogenesis. The sequence is that of Cytoplasmic dynein 2 heavy chain 1 from Caenorhabditis elegans.